Consider the following 746-residue polypeptide: Proline--tRNA ligase (746 aa).

The segment at 1–223 (MNNNTNGEII…NSNNNNNNNN (223 aa)) is required for editing of incorrectly charged tRNA. Residues 181 to 201 (TSKARVDKKEDVQEEMAKNEE) show a composition bias toward basic and acidic residues. The segment at 181-226 (TSKARVDKKEDVQEEMAKNEELQNNNNNNKNNSNSNNNNNNNNNHI) is disordered. Positions 204-224 (NNNNNNKNNSNSNNNNNNNNN) are enriched in low complexity. Arg-390 provides a ligand contact to L-proline. ATP is bound by residues 390-394 (RWEFK), 401-405 (RTREF), and 475-477 (QAA). His-480 lines the L-proline pocket. 512-514 (TTR) contacts ATP.

The protein belongs to the class-II aminoacyl-tRNA synthetase family. ProS type 3 subfamily. Homodimer.

It is found in the cytoplasm. It catalyses the reaction tRNA(Pro) + L-proline + ATP = L-prolyl-tRNA(Pro) + AMP + diphosphate. With respect to regulation, inhibited by the quinazolinone-based compound febrifugine from the Chinese plant Dichroa febrifuga which is used to treat malaria-associated fever. Also inhibited by febrifugine derivatives such as halofuginone. Its function is as follows. Catalyzes the attachment of proline to tRNA(Pro) in a two-step reaction: proline is first activated by ATP to form Pro-AMP and then transferred to the acceptor end of tRNA(Pro). Functions in trans to edit the amino acid moiety from incorrectly charged Ala-tRNA(Pro). Has no activity on correctly charged Pro-tRNA(Pro) or Ala-tRNA(Ala). This chain is Proline--tRNA ligase, found in Plasmodium falciparum (isolate 3D7).